The following is a 74-amino-acid chain: Porwaprin-a (74 aa).

Residues 1–24 form the signal peptide; that stretch reads MSSGGLLLLLGLLTLWEVLTPVSS. Positions 27–71 constitute a WAP domain; it reads RPKKLGLCPPRPQKPCVKECKNDWSCPGQQKCCNYGCIDECRDPI. Cystine bridges form between Cys34–Cys59, Cys42–Cys63, Cys46–Cys58, and Cys52–Cys67.

This sequence belongs to the venom waprin family. In terms of tissue distribution, expressed by the venom gland.

The protein resides in the secreted. Functionally, damages membranes of susceptible bacteria. Has no hemolytic activity. Not toxic to mice. Does not inhibit the proteinases elastase and cathepsin G. The polypeptide is Porwaprin-a (Pseudechis porphyriacus (Red-bellied black snake)).